Reading from the N-terminus, the 397-residue chain is Tryptophan synthase beta chain (397 aa).

K87 is subject to N6-(pyridoxal phosphate)lysine.

Belongs to the TrpB family. In terms of assembly, tetramer of two alpha and two beta chains. It depends on pyridoxal 5'-phosphate as a cofactor.

It carries out the reaction (1S,2R)-1-C-(indol-3-yl)glycerol 3-phosphate + L-serine = D-glyceraldehyde 3-phosphate + L-tryptophan + H2O. The protein operates within amino-acid biosynthesis; L-tryptophan biosynthesis; L-tryptophan from chorismate: step 5/5. Functionally, the beta subunit is responsible for the synthesis of L-tryptophan from indole and L-serine. The protein is Tryptophan synthase beta chain of Escherichia coli O45:K1 (strain S88 / ExPEC).